A 367-amino-acid polypeptide reads, in one-letter code: UDP-N-acetylglucosamine--N-acetylmuramyl-(pentapeptide) pyrophosphoryl-undecaprenol N-acetylglucosamine transferase (367 aa).

UDP-N-acetyl-alpha-D-glucosamine-binding positions include 15-17 (TGG), N127, R163, S191, I249, and Q294.

It belongs to the glycosyltransferase 28 family. MurG subfamily.

Its subcellular location is the cell inner membrane. It carries out the reaction di-trans,octa-cis-undecaprenyl diphospho-N-acetyl-alpha-D-muramoyl-L-alanyl-D-glutamyl-meso-2,6-diaminopimeloyl-D-alanyl-D-alanine + UDP-N-acetyl-alpha-D-glucosamine = di-trans,octa-cis-undecaprenyl diphospho-[N-acetyl-alpha-D-glucosaminyl-(1-&gt;4)]-N-acetyl-alpha-D-muramoyl-L-alanyl-D-glutamyl-meso-2,6-diaminopimeloyl-D-alanyl-D-alanine + UDP + H(+). Its pathway is cell wall biogenesis; peptidoglycan biosynthesis. Functionally, cell wall formation. Catalyzes the transfer of a GlcNAc subunit on undecaprenyl-pyrophosphoryl-MurNAc-pentapeptide (lipid intermediate I) to form undecaprenyl-pyrophosphoryl-MurNAc-(pentapeptide)GlcNAc (lipid intermediate II). The sequence is that of UDP-N-acetylglucosamine--N-acetylmuramyl-(pentapeptide) pyrophosphoryl-undecaprenol N-acetylglucosamine transferase from Burkholderia cenocepacia (strain ATCC BAA-245 / DSM 16553 / LMG 16656 / NCTC 13227 / J2315 / CF5610) (Burkholderia cepacia (strain J2315)).